The primary structure comprises 147 residues: D-aminoacyl-tRNA deacylase (147 aa).

The Gly-cisPro motif, important for rejection of L-amino acids signature appears at 136 to 137; that stretch reads GP.

This sequence belongs to the DTD family. In terms of assembly, homodimer.

Its subcellular location is the cytoplasm. The enzyme catalyses glycyl-tRNA(Ala) + H2O = tRNA(Ala) + glycine + H(+). It catalyses the reaction a D-aminoacyl-tRNA + H2O = a tRNA + a D-alpha-amino acid + H(+). In terms of biological role, an aminoacyl-tRNA editing enzyme that deacylates mischarged D-aminoacyl-tRNAs. Also deacylates mischarged glycyl-tRNA(Ala), protecting cells against glycine mischarging by AlaRS. Acts via tRNA-based rather than protein-based catalysis; rejects L-amino acids rather than detecting D-amino acids in the active site. By recycling D-aminoacyl-tRNA to D-amino acids and free tRNA molecules, this enzyme counteracts the toxicity associated with the formation of D-aminoacyl-tRNA entities in vivo and helps enforce protein L-homochirality. This chain is D-aminoacyl-tRNA deacylase, found in Streptococcus thermophilus (strain CNRZ 1066).